Here is a 639-residue protein sequence, read N- to C-terminus: Protein P1 (639 aa).

Residues 1 to 20 (MNRFTAYAALFFMFSLCSTA) form the signal peptide. Transmembrane regions (helical) follow at residues 121–141 (AASV…WTLA), 144–164 (ITLF…LGCI), and 172–192 (ALSL…KIIW). Residues 207–399 (VEGYKGFSVP…GITSPNYVFE (193 aa)) enclose the Peptidase S39 domain. Catalysis depends on for protease activity residues His255, Asp286, and Ser354. 2 disordered regions span residues 455–515 (ATNA…PPMD) and 539–639 (VSRV…NSKA). The span at 463-488 (TAQTNSAEKTAPSTSAEKTALTNKPL) shows a compositional bias: polar residues. Positions 548 to 561 (QKPKQKKRGRRGGK) are enriched in basic residues. Positions 566 to 577 (SLPPTSTQSTSG) are enriched in polar residues. Residues 587–602 (ASGSAGTSRATTTPAP) show a composition bias toward low complexity.

This sequence belongs to the peptidase S39B family. In terms of processing, specific enzymatic cleavages in vivo yield mature proteins. The protease probably cleaves itself and releases the VPg protein. The VPg protein is probably further cleaved in its C-terminus.

Its subcellular location is the membrane. Its function is as follows. Precursor from which the VPg molecule is probably released at the onset of the RNA synthesis. Essential for virus replication. Participates, together with the proteins P0 and P7, in the inhibition of the induction of aphid-induced host phytohormones. This could play a role in the attraction to the infected plants by aphids. In Solanum tuberosum (Potato), this protein is Protein P1.